The following is a 188-amino-acid chain: Elongation factor P (188 aa).

Residue lysine 34 is modified to N6-(3,6-diaminohexanoyl)-5-hydroxylysine.

The protein belongs to the elongation factor P family. May be beta-lysylated on the epsilon-amino group of Lys-34 by the combined action of EpmA and EpmB, and then hydroxylated on the C5 position of the same residue by EpmC (if this protein is present). Lysylation is critical for the stimulatory effect of EF-P on peptide-bond formation. The lysylation moiety may extend toward the peptidyltransferase center and stabilize the terminal 3-CCA end of the tRNA. Hydroxylation of the C5 position on Lys-34 may allow additional potential stabilizing hydrogen-bond interactions with the P-tRNA.

The protein localises to the cytoplasm. Its pathway is protein biosynthesis; polypeptide chain elongation. In terms of biological role, involved in peptide bond synthesis. Alleviates ribosome stalling that occurs when 3 or more consecutive Pro residues or the sequence PPG is present in a protein, possibly by augmenting the peptidyl transferase activity of the ribosome. Modification of Lys-34 is required for alleviation. The sequence is that of Elongation factor P from Coxiella burnetii (strain CbuK_Q154) (Coxiella burnetii (strain Q154)).